Here is a 314-residue protein sequence, read N- to C-terminus: Ribonuclease Z (314 aa).

Zn(2+) contacts are provided by histidine 61, histidine 63, aspartate 65, histidine 66, histidine 137, aspartate 207, and histidine 263. Catalysis depends on aspartate 65, which acts as the Proton acceptor.

The protein belongs to the RNase Z family. Homodimer. Zn(2+) is required as a cofactor.

It catalyses the reaction Endonucleolytic cleavage of RNA, removing extra 3' nucleotides from tRNA precursor, generating 3' termini of tRNAs. A 3'-hydroxy group is left at the tRNA terminus and a 5'-phosphoryl group is left at the trailer molecule.. Functionally, zinc phosphodiesterase, which displays some tRNA 3'-processing endonuclease activity. Probably involved in tRNA maturation, by removing a 3'-trailer from precursor tRNA. This Thermococcus kodakarensis (strain ATCC BAA-918 / JCM 12380 / KOD1) (Pyrococcus kodakaraensis (strain KOD1)) protein is Ribonuclease Z.